Here is a 227-residue protein sequence, read N- to C-terminus: Prolactin (227 aa).

Positions 1–28 (MNIKGSPWKGSLLLLLVSNLLLCQSVAP) are cleaved as a signal peptide. The cysteines at positions 32 and 39 are disulfide-linked. Position 54 is a phosphoserine (S54). N59 carries an N-linked (GlcNAc...) asparagine; partial glycan. Phosphoserine occurs at positions 62, 118, 163, and 194. 2 disulfide bridges follow: C86/C202 and C219/C227.

Belongs to the somatotropin/prolactin family. Interacts with PRLR.

It is found in the secreted. Functionally, prolactin acts primarily on the mammary gland by promoting lactation. This Homo sapiens (Human) protein is Prolactin (PRL).